The chain runs to 145 residues: SsrA-binding protein (145 aa).

This sequence belongs to the SmpB family.

The protein resides in the cytoplasm. Its function is as follows. Required for rescue of stalled ribosomes mediated by trans-translation. Binds to transfer-messenger RNA (tmRNA), required for stable association of tmRNA with ribosomes. tmRNA and SmpB together mimic tRNA shape, replacing the anticodon stem-loop with SmpB. tmRNA is encoded by the ssrA gene; the 2 termini fold to resemble tRNA(Ala) and it encodes a 'tag peptide', a short internal open reading frame. During trans-translation Ala-aminoacylated tmRNA acts like a tRNA, entering the A-site of stalled ribosomes, displacing the stalled mRNA. The ribosome then switches to translate the ORF on the tmRNA; the nascent peptide is terminated with the 'tag peptide' encoded by the tmRNA and targeted for degradation. The ribosome is freed to recommence translation, which seems to be the essential function of trans-translation. The sequence is that of SsrA-binding protein from Mesomycoplasma hyopneumoniae (strain 232) (Mycoplasma hyopneumoniae).